Here is a 328-residue protein sequence, read N- to C-terminus: Peroxidase 59 (328 aa).

The signal sequence occupies residues 1–28 (MKTQTKVMGGHVLLTVFTLCMLCSGVRA). Glutamine 29 is modified (pyrrolidone carboxylic acid). 4 cysteine pairs are disulfide-bonded: cysteine 39/cysteine 116, cysteine 72/cysteine 77, cysteine 122/cysteine 323, and cysteine 200/cysteine 232. The active-site Proton acceptor is the histidine 70. Positions 71, 74, 76, 78, and 80 each coordinate Ca(2+). A substrate-binding site is contributed by proline 163. An N-linked (GlcNAc...) asparagine glycan is attached at asparagine 182. Histidine 193 serves as a coordination point for heme b. Threonine 194 lines the Ca(2+) pocket. Asparagine 209 and asparagine 239 each carry an N-linked (GlcNAc...) asparagine glycan. Positions 245, 248, 251, and 253 each coordinate Ca(2+). N-linked (GlcNAc...) asparagine glycosylation is found at asparagine 281 and asparagine 310.

This sequence belongs to the peroxidase family. Classical plant (class III) peroxidase subfamily. Heme b serves as cofactor. Requires Ca(2+) as cofactor. Slightly expressed in roots.

The protein resides in the secreted. The catalysed reaction is 2 a phenolic donor + H2O2 = 2 a phenolic radical donor + 2 H2O. Functionally, removal of H(2)O(2), oxidation of toxic reductants, biosynthesis and degradation of lignin, suberization, auxin catabolism, response to environmental stresses such as wounding, pathogen attack and oxidative stress. These functions might be dependent on each isozyme/isoform in each plant tissue. This chain is Peroxidase 59 (PER59), found in Arabidopsis thaliana (Mouse-ear cress).